The following is a 128-amino-acid chain: MILGLGLDVVEVARIQRILAGPPARAERFLARVFAPAERAYCDARQDRATRYAARFAAKEAAVKALGTPEGVRWLDLVVERGTGAPSLALDGVAADAARRMGVARVHLTLTHDGGVAVAAVILEGAGP.

Residues D8 and E60 each contribute to the Mg(2+) site.

Belongs to the P-Pant transferase superfamily. AcpS family. The cofactor is Mg(2+).

It localises to the cytoplasm. The enzyme catalyses apo-[ACP] + CoA = holo-[ACP] + adenosine 3',5'-bisphosphate + H(+). In terms of biological role, transfers the 4'-phosphopantetheine moiety from coenzyme A to a Ser of acyl-carrier-protein. The chain is Holo-[acyl-carrier-protein] synthase from Anaeromyxobacter dehalogenans (strain 2CP-C).